The primary structure comprises 310 residues: uncharacterized protein (310 aa).

The segment at 1-70 (MAGNSQRRGA…ARGRTDETET (70 aa)) is disordered. A compositionally biased stretch (basic residues) spans 49–62 (AAKRAKAQQRRPAR). S-adenosyl-L-methionine contacts are provided by Gly-262, Val-282, and Leu-291.

The protein belongs to the class IV-like SAM-binding methyltransferase superfamily. RNA methyltransferase TrmH family.

This is an uncharacterized protein from Mycobacterium marinum (strain ATCC BAA-535 / M).